Consider the following 617-residue polypeptide: Probable Xaa-Pro aminopeptidase P (617 aa).

The Mn(2+) site is built by aspartate 414, aspartate 425, glutamate 523, and glutamate 537.

This sequence belongs to the peptidase M24B family. The cofactor is Mn(2+).

It catalyses the reaction Release of any N-terminal amino acid, including proline, that is linked to proline, even from a dipeptide or tripeptide.. Catalyzes the removal of a penultimate prolyl residue from the N-termini of peptides. The polypeptide is Probable Xaa-Pro aminopeptidase P (AMPP) (Ajellomyces dermatitidis (strain ER-3 / ATCC MYA-2586) (Blastomyces dermatitidis)).